The following is a 308-amino-acid chain: Tyramine--L-glutamate ligase (308 aa).

The 203-residue stretch at 89 to 291 (KSLLKSENID…LAELLIKNAN (203 aa)) folds into the ATP-grasp domain. Residue 115-192 (TKIIESYPVK…QEFIDGENLS (78 aa)) coordinates ATP. Residues Asp-252, Glu-264, and Asn-266 each contribute to the Mg(2+) site. Positions 252, 264, and 266 each coordinate Mn(2+).

Mg(2+) is required as a cofactor. Requires Mn(2+) as cofactor.

It carries out the reaction tyramine + L-glutamate + ATP = gamma-L-glutamyltyramine + ADP + phosphate + H(+). Its pathway is cofactor biosynthesis; methanofuran biosynthesis. In terms of biological role, catalyzes the formation of an amide bond between tyramine and the gamma carboxy group of L-glutamate. The enzyme also accepts phenylethylamine in vitro. This chain is Tyramine--L-glutamate ligase (mfnD), found in Methanocaldococcus jannaschii (strain ATCC 43067 / DSM 2661 / JAL-1 / JCM 10045 / NBRC 100440) (Methanococcus jannaschii).